The following is a 723-amino-acid chain: Protein Hook homolog (723 aa).

A Calponin-homology (CH) domain is found at 4-120 (TELCECLVQW…RLLQLILGCA (117 aa)). Coiled-coil stretches lie at residues 162–423 (VLPE…MQLQ) and 457–665 (EIKE…IVSA). The disordered stretch occupies residues 682-723 (LANGGPMQGGQSFLARQRQATSRRTTVSTTHPGHARSVNFVN). The segment covering 696–711 (ARQRQATSRRTTVSTT) has biased composition (low complexity).

Belongs to the hook family. Interacts with microtubules.

Its subcellular location is the cytoplasm. It localises to the cytoskeleton. In terms of biological role, may function to promote vesicle trafficking and/or fusion. May act to link a number of membrane-bound organelles to the cytoskeleton. This chain is Protein Hook homolog, found in Branchiostoma floridae (Florida lancelet).